The following is a 346-amino-acid chain: Histidinol-phosphate aminotransferase (346 aa).

An N6-(pyridoxal phosphate)lysine modification is found at lysine 209.

The protein belongs to the class-II pyridoxal-phosphate-dependent aminotransferase family. Histidinol-phosphate aminotransferase subfamily. In terms of assembly, homodimer. Pyridoxal 5'-phosphate serves as cofactor.

It carries out the reaction L-histidinol phosphate + 2-oxoglutarate = 3-(imidazol-4-yl)-2-oxopropyl phosphate + L-glutamate. Its pathway is amino-acid biosynthesis; L-histidine biosynthesis; L-histidine from 5-phospho-alpha-D-ribose 1-diphosphate: step 7/9. This Vibrio campbellii (strain ATCC BAA-1116) protein is Histidinol-phosphate aminotransferase.